A 38-amino-acid polypeptide reads, in one-letter code: Tyrosinase inhibitor (38 aa).

3 disulfides stabilise this stretch: Cys11–Cys25, Cys18–Cys29, and Cys24–Cys36. Tyr32 bears the 3',4'-dihydroxyphenylalanine mark.

As to quaternary structure, monomer. Contains L-DOPA (3',4'-dihydroxyphenylalanine).

Its subcellular location is the secreted. Its function is as follows. Potent reversible, competitive inhibitor of tyrosinase (phenol oxidase) in the nanomolar range. The polypeptide is Tyrosinase inhibitor (Musca domestica (House fly)).